The chain runs to 473 residues: UDP-N-acetylmuramate--L-alanine ligase (473 aa).

115 to 121 (GTHGKTT) is an ATP binding site.

This sequence belongs to the MurCDEF family.

It is found in the cytoplasm. It carries out the reaction UDP-N-acetyl-alpha-D-muramate + L-alanine + ATP = UDP-N-acetyl-alpha-D-muramoyl-L-alanine + ADP + phosphate + H(+). Its pathway is cell wall biogenesis; peptidoglycan biosynthesis. Its function is as follows. Cell wall formation. This Rhizorhabdus wittichii (strain DSM 6014 / CCUG 31198 / JCM 15750 / NBRC 105917 / EY 4224 / RW1) (Sphingomonas wittichii) protein is UDP-N-acetylmuramate--L-alanine ligase.